We begin with the raw amino-acid sequence, 83 residues long: uncharacterized protein (83 aa).

The first 20 residues, 1–20 (MRRALTLAVLATCAVLPALA), serve as a signal peptide directing secretion.

It to P.denitrificans and M.extorquens MoxJ.

This is an uncharacterized protein from Paracoccus denitrificans.